We begin with the raw amino-acid sequence, 974 residues long: Zinc finger protein 280D (974 aa).

Glycyl lysine isopeptide (Lys-Gly) (interchain with G-Cter in SUMO2) cross-links involve residues Lys44, Lys46, Lys86, Lys99, Lys138, Lys201, Lys222, Lys245, Lys287, and Lys304. The disordered stretch occupies residues Lys188–Ser216. 2 consecutive C2H2-type zinc fingers follow at residues Phe333 to His355 and Thr370 to His393. The segment at Thr400–Lys424 adopts a C2H2-type 3; degenerate zinc-finger fold. 2 C2H2-type zinc fingers span residues Tyr430–His453 and Leu459–His481. 3 disordered regions span residues Thr507–Thr624, Ile751–Gly797, and Val815–Ser974. Residues Ser539–Ser557 are compositionally biased toward low complexity. A Phosphoserine modification is found at Ser557. The segment covering Lys571 to Ala587 has biased composition (polar residues). Over residues Lys591–Ser611 the composition is skewed to low complexity. The segment covering Thr612–Thr624 has biased composition (polar residues). Lys752 participates in a covalent cross-link: Glycyl lysine isopeptide (Lys-Gly) (interchain with G-Cter in SUMO2). The span at Val763–Gly775 shows a compositional bias: basic and acidic residues. A compositionally biased stretch (polar residues) spans Val817–Ile829. A compositionally biased stretch (basic and acidic residues) spans Leu830–Gln860. Over residues Ser861–Ser884 the composition is skewed to polar residues. Phosphoserine occurs at positions 904 and 907. The span at Ser938–Gly950 shows a compositional bias: polar residues.

It is found in the nucleus. May function as a transcription factor. The sequence is that of Zinc finger protein 280D (Znf280d) from Mus musculus (Mouse).